Consider the following 220-residue polypeptide: B-cell antigen receptor complex-associated protein alpha chain (220 aa).

The N-terminal stretch at 1 to 28 (MPGGLEALRALPLLLFLSYACLGPGCQA) is a signal peptide. The Ig-like C2-type domain occupies 29–117 (LRVEGGPPSL…ILKRSCGTYL (89 aa)). Topologically, residues 29–137 (LRVEGGPPSL…LDMGEGTKNR (109 aa)) are extracellular. The cysteines at positions 50 and 101 are disulfide-linked. Asparagine 58 and asparagine 68 each carry an N-linked (GlcNAc...) asparagine glycan. Residues 138 to 159 (IITAEGIILLFCAVVPGTLLLF) traverse the membrane as a helical segment. At 160 to 220 (RKRWQNEKFG…HIGDAQLEKP (61 aa)) the chain is on the cytoplasmic side. An ITAM domain is found at 171–199 (DMPDDYEDENLYEGLNLDDCSMYEDISRG). Tyrosine 182 and tyrosine 193 each carry phosphotyrosine; by SRC-type Tyr-kinases. Arginine 198 is subject to Asymmetric dimethylarginine; by PRMT1. Tyrosine 204 carries the post-translational modification Phosphotyrosine; by Tyr-kinases.

As to quaternary structure, heterodimer of alpha and beta chains; disulfide-linked. Part of the B-cell antigen receptor complex where the alpha/beta chain heterodimer is non-covalently associated with an antigen-specific membrane-bound surface immunoglobulin of two heavy chains and two light chains. Interacts through its phosphorylated ITAM domain with the SH2 domains of SYK which stimulates SYK autophosphorylation and activation. Also interacts, when phosphorylated on Tyr-204, with the SH2 domain of BLNK/SLP65, bringing BLNK into proximity with SYK and allowing SYK to phosphorylate BLNK which is necessary for trafficking of the BCR to late endosomes. Interacts with Src-family tyrosine kinases including FYN and LYN, increasing their activity. In terms of processing, phosphorylated on tyrosine, serine and threonine residues upon B-cell activation. Phosphorylation of tyrosine residues by Src-family kinases, including LYN, is an early and essential feature of the BCR signaling cascade. The phosphorylated tyrosines serve as docking sites for SH2-domain containing kinases, leading to their activation which in turn leads to phosphorylation of downstream targets. Phosphorylation of serine and threonine residues may prevent subsequent tyrosine phosphorylation. Post-translationally, arginine methylation in the ITAM domain may interfere with the binding of SYK. It promotes signals leading to B-cell differentiation. In terms of tissue distribution, B-cells.

It is found in the cell membrane. Required in cooperation with CD79B for initiation of the signal transduction cascade activated by binding of antigen to the B-cell antigen receptor complex (BCR) which leads to internalization of the complex, trafficking to late endosomes and antigen presentation. Also required for BCR surface expression and for efficient differentiation of pro- and pre-B-cells. Stimulates SYK autophosphorylation and activation. Binds to BLNK, bringing BLNK into proximity with SYK and allowing SYK to phosphorylate BLNK. Also interacts with and increases activity of some Src-family tyrosine kinases. Represses BCR signaling during development of immature B-cells. The polypeptide is B-cell antigen receptor complex-associated protein alpha chain (Cd79a) (Mus musculus (Mouse)).